The following is a 359-amino-acid chain: Histidinol-phosphate aminotransferase (359 aa).

The residue at position 217 (Lys-217) is an N6-(pyridoxal phosphate)lysine.

The protein belongs to the class-II pyridoxal-phosphate-dependent aminotransferase family. Histidinol-phosphate aminotransferase subfamily. As to quaternary structure, homodimer. It depends on pyridoxal 5'-phosphate as a cofactor.

The enzyme catalyses L-histidinol phosphate + 2-oxoglutarate = 3-(imidazol-4-yl)-2-oxopropyl phosphate + L-glutamate. It functions in the pathway amino-acid biosynthesis; L-histidine biosynthesis; L-histidine from 5-phospho-alpha-D-ribose 1-diphosphate: step 7/9. This Salmonella arizonae (strain ATCC BAA-731 / CDC346-86 / RSK2980) protein is Histidinol-phosphate aminotransferase.